Here is a 102-residue protein sequence, read N- to C-terminus: Small ribosomal subunit protein uS10 (102 aa).

It belongs to the universal ribosomal protein uS10 family. In terms of assembly, part of the 30S ribosomal subunit.

In terms of biological role, involved in the binding of tRNA to the ribosomes. This Arthrobacter sp. (strain FB24) protein is Small ribosomal subunit protein uS10.